Reading from the N-terminus, the 428-residue chain is Chaperone SurA (428 aa).

An N-terminal signal peptide occupies residues M1–S19. PpiC domains follow at residues S170 to D268 and V277 to D377.

It localises to the periplasm. It carries out the reaction [protein]-peptidylproline (omega=180) = [protein]-peptidylproline (omega=0). Chaperone involved in the correct folding and assembly of outer membrane proteins. Recognizes specific patterns of aromatic residues and the orientation of their side chains, which are found more frequently in integral outer membrane proteins. May act in both early periplasmic and late outer membrane-associated steps of protein maturation. This Vibrio vulnificus (strain YJ016) protein is Chaperone SurA.